We begin with the raw amino-acid sequence, 445 residues long: Exodeoxyribonuclease 7 large subunit (445 aa).

The protein belongs to the XseA family. As to quaternary structure, heterooligomer composed of large and small subunits.

It is found in the cytoplasm. The catalysed reaction is Exonucleolytic cleavage in either 5'- to 3'- or 3'- to 5'-direction to yield nucleoside 5'-phosphates.. Bidirectionally degrades single-stranded DNA into large acid-insoluble oligonucleotides, which are then degraded further into small acid-soluble oligonucleotides. This is Exodeoxyribonuclease 7 large subunit from Xanthomonas oryzae pv. oryzae (strain MAFF 311018).